Here is a 66-residue protein sequence, read N- to C-terminus: Large ribosomal subunit protein bL35 (66 aa).

Residues 18–27 (ATGKIKSTQS) show a composition bias toward polar residues. Residues 18–41 (ATGKIKSTQSAKRHGMTKRSKRSI) are disordered. The segment covering 28-41 (AKRHGMTKRSKRSI) has biased composition (basic residues).

This sequence belongs to the bacterial ribosomal protein bL35 family.

This is Large ribosomal subunit protein bL35 from Ehrlichia ruminantium (strain Gardel).